Reading from the N-terminus, the 311-residue chain is MATYLDFEQKIKEIENELEAAKARGDTAAIEIFEKDLQKEASKTYKNLSDYQKLQLARHPDRPYALDYIRLILDDAYEIHGDRCFRDDPAILCYLGYIDGQKTLVIGEQKGRGTKNKLKRNFGMPHPEGYRKALRAAKMAEKFGLPILMLIDTPGAYPGIGAEERGQSEAIARNLIEFSMLDTPTISIVIGEGGSGGALAIGVADKLAMLKYSVFSVISPEGCAAILWNDPAKVEQATKALKITAEDLKELGLIDDIIDEPFMGAHRDKEGAAKALKEYYLQNIRELMQMDPKERLEKRYEKLMKMGRFKE.

In terms of domain architecture, CoA carboxyltransferase C-terminal spans 34-286 (EKDLQKEASK…KEYYLQNIRE (253 aa)).

The protein belongs to the AccA family. Acetyl-CoA carboxylase is a heterohexamer composed of biotin carboxyl carrier protein (AccB), biotin carboxylase (AccC) and two subunits each of ACCase subunit alpha (AccA) and ACCase subunit beta (AccD).

It is found in the cytoplasm. The enzyme catalyses N(6)-carboxybiotinyl-L-lysyl-[protein] + acetyl-CoA = N(6)-biotinyl-L-lysyl-[protein] + malonyl-CoA. It functions in the pathway lipid metabolism; malonyl-CoA biosynthesis; malonyl-CoA from acetyl-CoA: step 1/1. Functionally, component of the acetyl coenzyme A carboxylase (ACC) complex. First, biotin carboxylase catalyzes the carboxylation of biotin on its carrier protein (BCCP) and then the CO(2) group is transferred by the carboxyltransferase to acetyl-CoA to form malonyl-CoA. The chain is Acetyl-coenzyme A carboxylase carboxyl transferase subunit alpha from Nitratiruptor sp. (strain SB155-2).